Consider the following 162-residue polypeptide: MALLDRTARSFLLTEIVSGMALTLKYFFKPKATINYPYEKNPISPRFKGEHALRRYANGEERCIACKLCEAVCPALAITIEAEPRADGSRRTTRYDIDMTKCIYCGLCEEACPVDAIVEGPNLEFATETREELMYNKDRLLANGDRWEPEIARRLELDAPYR.

2 4Fe-4S ferredoxin-type domains span residues 53–83 (LRRY…IEAE) and 93–122 (TRYD…EGPN). 8 residues coordinate [4Fe-4S] cluster: cysteine 63, cysteine 66, cysteine 69, cysteine 73, cysteine 102, cysteine 105, cysteine 108, and cysteine 112.

It belongs to the complex I 23 kDa subunit family. NDH-1 is composed of 14 different subunits. Subunits NuoA, H, J, K, L, M, N constitute the membrane sector of the complex. It depends on [4Fe-4S] cluster as a cofactor.

It localises to the cell inner membrane. It catalyses the reaction a quinone + NADH + 5 H(+)(in) = a quinol + NAD(+) + 4 H(+)(out). In terms of biological role, NDH-1 shuttles electrons from NADH, via FMN and iron-sulfur (Fe-S) centers, to quinones in the respiratory chain. The immediate electron acceptor for the enzyme in this species is believed to be ubiquinone. Couples the redox reaction to proton translocation (for every two electrons transferred, four hydrogen ions are translocated across the cytoplasmic membrane), and thus conserves the redox energy in a proton gradient. The polypeptide is NADH-quinone oxidoreductase subunit I (Granulibacter bethesdensis (strain ATCC BAA-1260 / CGDNIH1)).